A 103-amino-acid chain; its full sequence is MYAVIKTGGKQYRVATGEKLKVEQIPADIGQEITLDQVLSVGEGDQLKVGTPLVSGAVVKATVLAHGRHDKIKIFKMRRRKHYQKHQGHRQNYTEIRIEAITA.

Belongs to the bacterial ribosomal protein bL21 family. In terms of assembly, part of the 50S ribosomal subunit. Contacts protein L20.

Functionally, this protein binds to 23S rRNA in the presence of protein L20. This Bordetella parapertussis (strain 12822 / ATCC BAA-587 / NCTC 13253) protein is Large ribosomal subunit protein bL21.